Reading from the N-terminus, the 195-residue chain is CASP-like protein 1B1 (195 aa).

Topologically, residues 1 to 22 are cytoplasmic; it reads MGLQNEEKLELGCTGLQPKPKK. Residues 23–43 traverse the membrane as a helical segment; the sequence is WVLLMVRVVAFLATAAATLVM. The Extracellular segment spans residues 44-75; sequence ALNKETKTLVVATVGNTPIKVTLTAKFQHTPA. Residues 76 to 96 form a helical membrane-spanning segment; that stretch reads FVFFVIANGMASFHNLLMIMV. Over 97 to 109 the chain is Cytoplasmic; the sequence is ELCGQKLDYKGMR. The chain crosses the membrane as a helical span at residues 110-130; the sequence is LAMVAILDMMTVALVSGGASA. Residues 131 to 163 are Extracellular-facing; sequence ATFMAELGKNGNSHARWDKICDKFETFCDHGGA. Residues 164 to 184 form a helical membrane-spanning segment; the sequence is ALIASSAGLILMMIISVMSIM. Residues 185–195 lie on the Cytoplasmic side of the membrane; the sequence is KLLIKPKSDSS.

The protein belongs to the Casparian strip membrane proteins (CASP) family. As to quaternary structure, homodimer and heterodimers.

Its subcellular location is the cell membrane. The protein is CASP-like protein 1B1 of Populus trichocarpa (Western balsam poplar).